A 230-amino-acid polypeptide reads, in one-letter code: Orotidine 5'-phosphate decarboxylase (230 aa).

Substrate-binding positions include aspartate 10, lysine 32, 59–68 (DLKYHDIPNT), threonine 119, arginine 180, glutamine 189, glycine 209, and arginine 210. The active-site Proton donor is lysine 61.

The protein belongs to the OMP decarboxylase family. Type 1 subfamily. In terms of assembly, homodimer.

It catalyses the reaction orotidine 5'-phosphate + H(+) = UMP + CO2. It functions in the pathway pyrimidine metabolism; UMP biosynthesis via de novo pathway; UMP from orotate: step 2/2. In terms of biological role, catalyzes the decarboxylation of orotidine 5'-monophosphate (OMP) to uridine 5'-monophosphate (UMP). In Actinobacillus pleuropneumoniae serotype 5b (strain L20), this protein is Orotidine 5'-phosphate decarboxylase.